A 201-amino-acid chain; its full sequence is Peptidyl-tRNA hydrolase (201 aa).

A tRNA-binding site is contributed by Tyr17. His22 (proton acceptor) is an active-site residue. Phe76, Asn78, and Asn124 together coordinate tRNA.

Belongs to the PTH family. As to quaternary structure, monomer.

Its subcellular location is the cytoplasm. The catalysed reaction is an N-acyl-L-alpha-aminoacyl-tRNA + H2O = an N-acyl-L-amino acid + a tRNA + H(+). Its function is as follows. Hydrolyzes ribosome-free peptidyl-tRNAs (with 1 or more amino acids incorporated), which drop off the ribosome during protein synthesis, or as a result of ribosome stalling. In terms of biological role, catalyzes the release of premature peptidyl moieties from peptidyl-tRNA molecules trapped in stalled 50S ribosomal subunits, and thus maintains levels of free tRNAs and 50S ribosomes. This is Peptidyl-tRNA hydrolase from Oleidesulfovibrio alaskensis (strain ATCC BAA-1058 / DSM 17464 / G20) (Desulfovibrio alaskensis).